The primary structure comprises 432 residues: GTPase HflX (432 aa).

The region spanning 202 to 367 (FTVALVGYTN…ELRRAVGRAM (166 aa)) is the Hflx-type G domain. GTP-binding positions include 208 to 215 (GYTNAGKS), 233 to 237 (FATLD), 255 to 258 (DTVG), 321 to 324 (NKID), and 345 to 347 (SAQ). Mg(2+)-binding residues include Ser-215 and Thr-235.

The protein belongs to the TRAFAC class OBG-HflX-like GTPase superfamily. HflX GTPase family. Monomer. Associates with the 50S ribosomal subunit. Requires Mg(2+) as cofactor.

It localises to the cytoplasm. GTPase that associates with the 50S ribosomal subunit and may have a role during protein synthesis or ribosome biogenesis. This is GTPase HflX from Magnetococcus marinus (strain ATCC BAA-1437 / JCM 17883 / MC-1).